A 400-amino-acid chain; its full sequence is NADPH dehydrogenase 1 (400 aa).

2 residues coordinate FMN: threonine 38 and glutamine 115. Substrate-binding residues include histidine 192 and asparagine 195. Tyrosine 197 acts as the Proton donor in catalysis. Arginine 244 and arginine 349 together coordinate FMN. Tyrosine 376 lines the substrate pocket.

As to quaternary structure, homodimer or heterodimer. FMN serves as cofactor.

The catalysed reaction is A + NADPH + H(+) = AH2 + NADP(+). Functionally, flavin-dependent enoate reductase that catalyzes the chemo- and stereoslective hydrogenation of electron-poor alkenes. The enzyme is reduced by NADPH, and oxygen, quinones, and alpha,beta-unsaturated aldehydes and ketones can act as electron acceptors to complete catalytic turnover. The physiological oxidant remains elusive. This chain is NADPH dehydrogenase 1, found in Saccharomyces pastorianus (Lager yeast).